We begin with the raw amino-acid sequence, 205 residues long: MDTLLVAADSALRTLFARPRAGEPSPARSLPAVDLSVEQRRLSSALMRVNHVGEVCAQGLYMAQSCVTRDPQLRSDLLAAAREETDHLAWTRERLDALGSRPSLLNPLWFAGAFAIGLVAARVSDQASLGFVVETERQVSAHLQGHLRRLPEADLPSRAIVDRMQRDEERHAAQAQAAGALPLPPPARWLMKAAAKVMTTTAHHI.

The Fe cation site is built by Glu-54, Glu-84, His-87, Glu-136, Glu-168, and His-171.

It belongs to the COQ7 family. It depends on Fe cation as a cofactor.

The protein resides in the cell membrane. The catalysed reaction is a 5-methoxy-2-methyl-3-(all-trans-polyprenyl)benzene-1,4-diol + AH2 + O2 = a 3-demethylubiquinol + A + H2O. Its pathway is cofactor biosynthesis; ubiquinone biosynthesis. Its function is as follows. Catalyzes the hydroxylation of 2-nonaprenyl-3-methyl-6-methoxy-1,4-benzoquinol during ubiquinone biosynthesis. This is 3-demethoxyubiquinol 3-hydroxylase from Acidovorax sp. (strain JS42).